A 298-amino-acid chain; its full sequence is Centromere protein O (298 aa).

The interval 29-49 (NISNRKSEEPAVRKKESSLRT) is disordered. Positions 33-49 (RKSEEPAVRKKESSLRT) are enriched in basic and acidic residues. Ser-35 bears the Phosphoserine mark. The stretch at 39-74 (AVRKKESSLRTKIRELRQQRDKLRAEVKQWGARVKE) forms a coiled coil.

The protein belongs to the CENP-O/MCM21 family. As to quaternary structure, component of the CENPA-CAD complex, composed of CENPI, CENPK, CENPL, CENPO, CENPP, CENPQ, CENPR and CENPS. The CENPA-CAD complex interacts with the CENPA-NAC complex, at least composed of CENPA, CENPC, CENPH, CENPM, CENPN, CENPT and CENPU.

The protein resides in the nucleus. It localises to the chromosome. Its subcellular location is the centromere. It is found in the kinetochore. Functionally, component of the CENPA-CAD (nucleosome distal) complex, a complex recruited to centromeres which is involved in assembly of kinetochore proteins, mitotic progression and chromosome segregation. May be involved in incorporation of newly synthesized CENPA into centromeres via its interaction with the CENPA-NAC complex. Modulates the kinetochore-bound levels of NDC80 complex. The sequence is that of Centromere protein O (Cenpo) from Mus musculus (Mouse).